Consider the following 2415-residue polypeptide: Bradyzoite-formation deficient protein 1 (2415 aa).

3 disordered regions span residues 369–392 (WNKP…PEET), 418–481 (HLTS…PYTR), and 761–845 (DGCG…QDTQ). Basic residues predominate over residues 419–429 (LTSRQHPNPRP). The span at 430 to 443 (RMKEEHCGREREVL) shows a compositional bias: basic and acidic residues. 2 stretches are compositionally biased toward polar residues: residues 444 to 460 (SSEQ…TPAS) and 832 to 843 (PRTTSSSSYGQD). Residues 921–968 (WSAEEDASLAELVSRKGFKWALISSQLTGAFGIPRTGKQCRERWFNHV) enclose the Myb-like domain. Residues 969-1023 (NPEVKKGDWSAEEDAMILMLQNELGNRWATIAKKLRGRTENAVKNRFISLSNARL) form the HTH myb-type domain. The segment at residues 996–1019 (WATIAKKLRGRTENAVKNRFISLS) is a DNA-binding region (H-T-H motif). Disordered regions lie at residues 1027–1050 (RPKR…KSSG), 1098–1127 (VSRP…LKNT), 1206–1270 (NDER…NGLD), 1319–1343 (PACD…AQRQ), 1501–1521 (QLWT…QQHE), 1905–1932 (VSRD…TSQS), 1959–2013 (RVRW…GSTA), and 2161–2222 (GTDA…EMQD). A compositionally biased stretch (polar residues) spans 1036–1050 (DCFSNRRTGSGKSSG). Residues 1227-1237 (AHEHADIARSD) are compositionally biased toward basic and acidic residues. Polar residues-rich tracts occupy residues 1327 to 1343 (PQNS…AQRQ) and 1501 to 1520 (QLWT…NQQH). A compositionally biased stretch (polar residues) spans 1974 to 1985 (SVSSGASNSATT). Basic and acidic residues predominate over residues 2181–2197 (QAHRRDGHDMQRVQRCD).

The protein localises to the nucleus. Functionally, master transcription factor that controls the differentiation of acute-stage tachyzoite parasites into chronic-stage bradyzoites, which form intracellular cysts resistant to immune clearance and existing therapies. Sufficient to drive differentiation into bradyzoite stage. Following translation in response to stress conditions, binds to the promoter of many chronic stage-specific genes and promotes their expression, thereby driving differentiation into bradyzoites. The protein is Bradyzoite-formation deficient protein 1 of Toxoplasma gondii (strain ATCC 50611 / Me49).